Here is a 98-residue protein sequence, read N- to C-terminus: Aspartyl/glutamyl-tRNA(Asn/Gln) amidotransferase subunit C (98 aa).

Residues 77–98 (NEAPNPEGDFFRVPQILNTDEE) are disordered.

The protein belongs to the GatC family. As to quaternary structure, heterotrimer of A, B and C subunits.

It catalyses the reaction L-glutamyl-tRNA(Gln) + L-glutamine + ATP + H2O = L-glutaminyl-tRNA(Gln) + L-glutamate + ADP + phosphate + H(+). The enzyme catalyses L-aspartyl-tRNA(Asn) + L-glutamine + ATP + H2O = L-asparaginyl-tRNA(Asn) + L-glutamate + ADP + phosphate + 2 H(+). Its function is as follows. Allows the formation of correctly charged Asn-tRNA(Asn) or Gln-tRNA(Gln) through the transamidation of misacylated Asp-tRNA(Asn) or Glu-tRNA(Gln) in organisms which lack either or both of asparaginyl-tRNA or glutaminyl-tRNA synthetases. The reaction takes place in the presence of glutamine and ATP through an activated phospho-Asp-tRNA(Asn) or phospho-Glu-tRNA(Gln). The protein is Aspartyl/glutamyl-tRNA(Asn/Gln) amidotransferase subunit C of Crocosphaera subtropica (strain ATCC 51142 / BH68) (Cyanothece sp. (strain ATCC 51142)).